The chain runs to 169 residues: Protein YABBY 7 (169 aa).

Residues 21–48 (CSFCATVLLVSVPCSSVLRVVAVQCGHC) form a C4-type zinc finger. The segment at 63–122 (SASIELTPQELDAGPPPGEYSDESSGDDREGRDAEDDAPAPAAAAVANKPPGRKQRTPSA) is disordered.

The protein belongs to the YABBY family. Expressed in leaf sheaths and flowers.

The protein resides in the nucleus. In Oryza sativa subsp. japonica (Rice), this protein is Protein YABBY 7 (YAB7).